The following is a 364-amino-acid chain: Peptide chain release factor 2 (364 aa).

Glutamine 251 is subject to N5-methylglutamine.

This sequence belongs to the prokaryotic/mitochondrial release factor family. In terms of processing, methylated by PrmC. Methylation increases the termination efficiency of RF2.

The protein resides in the cytoplasm. Functionally, peptide chain release factor 2 directs the termination of translation in response to the peptide chain termination codons UGA and UAA. In Sulfurovum sp. (strain NBC37-1), this protein is Peptide chain release factor 2.